Reading from the N-terminus, the 101-residue chain is Small ribosomal subunit protein uS14A (101 aa).

The tract at residues 28–57 (KDIIRSPSSAPEQRSTAQRALARQPRDASP) is disordered. A compositionally biased stretch (polar residues) spans 33 to 45 (SPSSAPEQRSTAQ).

This sequence belongs to the universal ribosomal protein uS14 family. As to quaternary structure, part of the 30S ribosomal subunit. Contacts proteins S3 and S10.

Its function is as follows. Binds 16S rRNA, required for the assembly of 30S particles and may also be responsible for determining the conformation of the 16S rRNA at the A site. The protein is Small ribosomal subunit protein uS14A of Mycobacterium bovis (strain ATCC BAA-935 / AF2122/97).